The primary structure comprises 370 residues: Aldo-keto reductase dtxS3 (370 aa).

Position 78 (Asp78) interacts with NADP(+). The active-site Proton donor is Tyr83. Position 174 (His174) interacts with substrate. NADP(+) contacts are provided by residues 204–205 (SS), Gln230, 259–269 (GPLASGRLARR), and 333–341 (GSVGRIEEA).

This sequence belongs to the aldo/keto reductase family.

It participates in secondary metabolite biosynthesis. Aldo-keto reductase; part of the gene cluster that mediates the biosynthesis of destruxins, insecticidal cyclic hexadepsipeptides which induce flaccid paralysis and visceral muscle contraction in insects through targeting the calcium channels and vacuolar-type ATPases. The aldo-keto reductase dtxS3 converts alpha-ketoisocaproic acid from deaminated leucine into alpha-hydroxyisocaproic acid (HIC), which is the first substrate for destruxin assembly by dtxS1. L-aspartate decarboxylase dtxS4 converts aspartic acid into beta-alanine, the last substrate for the destruxin assembly line performed by dtxS1. The nonribosomal peptide synthetase dtxS1 synthesizes destruxins B and B2, whereas the cytochrome P450 monooxygenase dtxS2 is required to convert destruxin B into other destruxin derivatives, including destructins C, D, A and E. Destruxin E-diol (ED) is further produced in a non-enzymatic manner from destruxin E. Destruxins play an important role in virulence and escape from insect host immune defenses. This Metarhizium robertsii (strain ARSEF 23 / ATCC MYA-3075) (Metarhizium anisopliae (strain ARSEF 23)) protein is Aldo-keto reductase dtxS3.